We begin with the raw amino-acid sequence, 517 residues long: GMP synthase [glutamine-hydrolyzing] (517 aa).

The Glutamine amidotransferase type-1 domain occupies 9–199 (RILILDFGSQ…VLNACGCEGL (191 aa)). C86 serves as the catalytic Nucleophile. Residues H173 and E175 contribute to the active site. The GMPS ATP-PPase domain maps to 200-392 (WTSASIIEDA…LGLPYNMLYR (193 aa)). 227–233 (SGGVDSS) is a binding site for ATP.

In terms of assembly, homodimer.

The catalysed reaction is XMP + L-glutamine + ATP + H2O = GMP + L-glutamate + AMP + diphosphate + 2 H(+). It functions in the pathway purine metabolism; GMP biosynthesis; GMP from XMP (L-Gln route): step 1/1. Its function is as follows. Catalyzes the synthesis of GMP from XMP. The chain is GMP synthase [glutamine-hydrolyzing] from Vibrio atlanticus (strain LGP32) (Vibrio splendidus (strain Mel32)).